The chain runs to 134 residues: Acyl carrier protein SF2, chloroplastic (134 aa).

Residues 1-51 (MSTTFCSSVSMQATSLAATTRISFQKPALVSTTNLSFNLRRSIPTRFSISC) constitute a chloroplast transit peptide. In terms of domain architecture, Carrier spans 55–130 (PETVEKVSKI…EAAELIEELV (76 aa)). At S90 the chain carries O-(pantetheine 4'-phosphoryl)serine.

This sequence belongs to the acyl carrier protein (ACP) family. 4'-phosphopantetheine is transferred from CoA to a specific serine of apo-ACP by acpS. This modification is essential for activity because fatty acids are bound in thioester linkage to the sulfhydryl of the prosthetic group.

It localises to the plastid. The protein resides in the chloroplast. Its pathway is lipid metabolism; fatty acid biosynthesis. Carrier of the growing fatty acid chain in fatty acid biosynthesis. This Brassica campestris (Field mustard) protein is Acyl carrier protein SF2, chloroplastic (Acl1.1).